A 427-amino-acid chain; its full sequence is Inward rectifier potassium channel 2 (427 aa).

At 1–81 (MGSVRTNRYS…IFTTCVDIRW (81 aa)) the chain is on the cytoplasmic side. C76 bears the S-nitrosocysteine mark. A helical transmembrane segment spans residues 82 to 106 (RWMLVIFCLAFVLSWLFFGCVFWLI). Topologically, residues 107-128 (ALLHGDLDASKESKACVSEVNS) are extracellular. The segment at residues 129 to 140 (FTAAFLFSIETQ) is an intramembrane region (helical; Pore-forming). The segment at residues 141 to 147 (TTIGYGF) is an intramembrane region (pore-forming). The short motif at 142–147 (TIGYGF) is the Selectivity filter element. Topologically, residues 148 to 156 (RCVTDECPI) are extracellular. A helical transmembrane segment spans residues 157-178 (AVFMVVFQSIVGCIIDAFIIGA). Residues 179-427 (VMAKMAKPKK…PRPLRRESEI (249 aa)) lie on the Cytoplasmic side of the membrane. The segment at 181-208 (AKMAKPKKRNETLVFSHNAVIAMRDGKL) is polyphosphoinositide (PIP2)-binding. Residues 383 to 427 (TSKEEEDSENGVPESTSTDSPPGIDLHNQASVPLEPRPLRRESEI) form a disordered region. The short motif at 425-427 (SEI) is the PDZ-binding element.

It belongs to the inward rectifier-type potassium channel (TC 1.A.2.1) family. KCNJ2 subfamily. In terms of assembly, homotetramer. Homomultimeric and heteromultimeric association with KCNJ4/Kir2.3. Can form heteromeric channels with Kir2.6/KCNJ18. Associates, via its PDZ-recognition domain, with a complex containing LIN7A, LIN7B, LIN7C, DLG1, CASK and APBA1. S-nitrosylation increases the open probability and inward rectifying currents. As to expression, prominently expressed in the central nervous system. Also found in other excitable tissues such as heart and skeletal muscle.

Its subcellular location is the cell membrane. It is found in the sarcolemma. It localises to the T-tubule. The enzyme catalyses K(+)(in) = K(+)(out). With respect to regulation, activated by phosphatidylinositol 4,5 biphosphate (PtdIns(4,5)P2). Its function is as follows. Inward rectifier potassium channels are characterized by a greater tendency to allow potassium to flow into the cell rather than out of it. Their voltage dependence is regulated by the concentration of extracellular potassium; as external potassium is raised, the voltage range of the channel opening shifts to more positive voltages. The inward rectification is mainly due to the blockage of outward current by internal magnesium. Can be blocked by extracellular barium and cesium. Probably participates in establishing action potential waveform and excitability of neuronal and muscle tissues. The sequence is that of Inward rectifier potassium channel 2 (Kcnj2) from Rattus norvegicus (Rat).